The primary structure comprises 444 residues: Trigger factor (444 aa).

The region spanning 166-251 (GDQVVIDFEG…VHAVKAPKPA (86 aa)) is the PPIase FKBP-type domain.

This sequence belongs to the FKBP-type PPIase family. Tig subfamily.

The protein resides in the cytoplasm. It carries out the reaction [protein]-peptidylproline (omega=180) = [protein]-peptidylproline (omega=0). Functionally, involved in protein export. Acts as a chaperone by maintaining the newly synthesized protein in an open conformation. Functions as a peptidyl-prolyl cis-trans isomerase. The chain is Trigger factor (tig) from Rhodobacter capsulatus (strain ATCC BAA-309 / NBRC 16581 / SB1003).